We begin with the raw amino-acid sequence, 537 residues long: Ribonuclease Y (537 aa).

The helical transmembrane segment at 4-24 threads the bilayer; that stretch reads FPIIMSVFAAIIGLVIGYVSV. Residues 112–148 are disordered; sequence ASTLDRKDDNLSNKEKALEQKEQSLSDKSKHIDAREE. A KH domain is found at 227-287; the sequence is TNSTVHLPDD…IRREIARMTM (61 aa). The region spanning 353-446 is the HD domain; the sequence is VLRHSIEVAK…VAAADALSAA (94 aa).

The protein belongs to the RNase Y family.

The protein localises to the cell membrane. In terms of biological role, endoribonuclease that initiates mRNA decay. This is Ribonuclease Y from Streptococcus sanguinis (strain SK36).